Consider the following 259-residue polypeptide: Probable metal transport system ATP-binding protein TC_0339 (259 aa).

The ABC transporter domain maps to 9–241; that stretch reads WAVDDLCVNY…AIFQAYGCEL (233 aa). Position 41–48 (41–48) interacts with ATP; the sequence is GPNGAGKS.

This sequence belongs to the ABC transporter superfamily.

The protein localises to the cell inner membrane. In terms of biological role, part of an ATP-driven transport system TC_0338/TC_0339/TC_0341/TC_0342 for a metal. Probably responsible for energy coupling to the transport system. The chain is Probable metal transport system ATP-binding protein TC_0339 from Chlamydia muridarum (strain MoPn / Nigg).